We begin with the raw amino-acid sequence, 491 residues long: Meiosis-specific nuclear structural protein 1 (491 aa).

An interaction with BBOF1 region spans residues 1 to 314 (MATKKRALSF…QLEETLRQRD (314 aa)). Coiled-coil stretches lie at residues 29 to 253 (QVMN…RAQD) and 287 to 410 (RVHE…AVEK). Tyr188 carries the post-translational modification Phosphotyrosine.

Belongs to the MNS1 family. In terms of assembly, able to form oligomers. Microtubule inner protein component of sperm flagellar doublet microtubules. Interacts with ODAD1. Interacts with BBOF1. In terms of tissue distribution, high expression in testis. Expressed in pachytene spermatocytes and post-meiotic spermatids.

The protein resides in the nucleus. It is found in the cytoplasm. Its subcellular location is the cytoskeleton. The protein localises to the flagellum axoneme. It localises to the cilium axoneme. Microtubule inner protein (MIP) part of the dynein-decorated doublet microtubules (DMTs) in cilia axoneme, which is required for motile cilia beating. May play a role in the control of meiotic division and germ cell differentiation through regulation of pairing and recombination during meiosis. Required for sperm flagella assembly. May play a role in the assembly and function of the outer dynein arm-docking complex (ODA-DC). ODA-DC mediates outer dynein arms (ODA) binding onto the axonemal doublet microtubules. This is Meiosis-specific nuclear structural protein 1 (Mns1) from Mus musculus (Mouse).